We begin with the raw amino-acid sequence, 429 residues long: Adenylosuccinate synthetase (429 aa).

GTP contacts are provided by residues 12 to 18 (GDEGKGK) and 40 to 42 (GHT). Asp-13 functions as the Proton acceptor in the catalytic mechanism. Asp-13 and Gly-40 together coordinate Mg(2+). IMP-binding positions include 13–16 (DEGK), 38–41 (NAGH), Thr-128, Arg-142, Gln-223, Thr-238, and Arg-302. The Proton donor role is filled by His-41. 298–304 (TTTGRPR) lines the substrate pocket. Residues Arg-304, 330–332 (SID), and 412–414 (SVG) contribute to the GTP site.

Belongs to the adenylosuccinate synthetase family. In terms of assembly, homodimer. Mg(2+) is required as a cofactor.

It is found in the cytoplasm. It carries out the reaction IMP + L-aspartate + GTP = N(6)-(1,2-dicarboxyethyl)-AMP + GDP + phosphate + 2 H(+). It participates in purine metabolism; AMP biosynthesis via de novo pathway; AMP from IMP: step 1/2. In terms of biological role, plays an important role in the de novo pathway of purine nucleotide biosynthesis. Catalyzes the first committed step in the biosynthesis of AMP from IMP. This is Adenylosuccinate synthetase from Bacillus cereus (strain ATCC 14579 / DSM 31 / CCUG 7414 / JCM 2152 / NBRC 15305 / NCIMB 9373 / NCTC 2599 / NRRL B-3711).